We begin with the raw amino-acid sequence, 179 residues long: Large ribosomal subunit protein uL5 (179 aa).

It belongs to the universal ribosomal protein uL5 family. Part of the 50S ribosomal subunit; part of the 5S rRNA/L5/L18/L25 subcomplex. Contacts the 5S rRNA and the P site tRNA. Forms a bridge to the 30S subunit in the 70S ribosome.

This is one of the proteins that bind and probably mediate the attachment of the 5S RNA into the large ribosomal subunit, where it forms part of the central protuberance. In the 70S ribosome it contacts protein S13 of the 30S subunit (bridge B1b), connecting the 2 subunits; this bridge is implicated in subunit movement. Contacts the P site tRNA; the 5S rRNA and some of its associated proteins might help stabilize positioning of ribosome-bound tRNAs. The chain is Large ribosomal subunit protein uL5 from Rickettsia rickettsii (strain Iowa).